A 236-amino-acid polypeptide reads, in one-letter code: Small ribosomal subunit protein uS2c (236 aa).

This sequence belongs to the universal ribosomal protein uS2 family.

It localises to the plastid. It is found in the chloroplast. This is Small ribosomal subunit protein uS2c (rps2) from Citrus sinensis (Sweet orange).